The primary structure comprises 233 residues: LOB domain-containing protein 40 (233 aa).

The 107-residue stretch at 3–109 (MSCNGCRVLR…VEAVMRGSPV (107 aa)) folds into the LOB domain. The span at 143–160 (KRRSRGACKEERNVRSLS) shows a compositional bias: basic and acidic residues. The segment at 143-183 (KRRSRGACKEERNVRSLSHESSLSHESPVSSEETTTEEPKT) is disordered. The segment covering 161–175 (HESSLSHESPVSSEE) has biased composition (low complexity).

Belongs to the LOB domain-containing protein family. As to expression, expressed in roots and flowers.

The polypeptide is LOB domain-containing protein 40 (LBD40) (Arabidopsis thaliana (Mouse-ear cress)).